Consider the following 448-residue polypeptide: Tryptophan--tRNA ligase (448 aa).

ATP-binding positions include 10 to 12 (TPT) and 18 to 19 (GN). The 'HIGH' region signature appears at 11–19 (PTGTPHLGN). Asp-143 is an L-tryptophan binding site. ATP contacts are provided by residues 155 to 157 (GRD), Leu-197, and 204 to 208 (KMSKS). Positions 204-208 (KMSKS) match the 'KMSKS' region motif.

The protein belongs to the class-I aminoacyl-tRNA synthetase family. In terms of assembly, homodimer.

The protein resides in the cytoplasm. It carries out the reaction tRNA(Trp) + L-tryptophan + ATP = L-tryptophyl-tRNA(Trp) + AMP + diphosphate + H(+). In terms of biological role, catalyzes the attachment of tryptophan to tRNA(Trp). The chain is Tryptophan--tRNA ligase from Pseudomonas aeruginosa (strain ATCC 15692 / DSM 22644 / CIP 104116 / JCM 14847 / LMG 12228 / 1C / PRS 101 / PAO1).